We begin with the raw amino-acid sequence, 373 residues long: MPSVSAVILKLAAAALSALLLSGVAANATSRIKDLANIEGVRQNQLIGYGLVVGLNGTGDTLNNIPFTKQSLQAMLERMGVNIRGATIRTGNVAAVMVTGNLPAFATQGTRMDVTVSALGDAKNLQGGTLLVTPLLGADGNVYAVAQGSLAIGGFQAEGEAAKITRGVPTVGRIANGAIIEREIEFALNRLPMVRLALRNADFTTAKRIAAAVNDFLGTKSAEPIDPSTVQLTIPAEFKGNAVAFVTEIEQLQVEPDQAAKIIIDERSGIIVMGRDVRVATVAVAQGNLTVSISESPQVSQPNPLANGRTVVTPNSRIGVTEDGKKLALVKDGVSLQQLVDGLNGLGIGPRDLIGILQAIKAAGAIEADIEVM.

The N-terminal stretch at 1–28 (MPSVSAVILKLAAAALSALLLSGVAANA) is a signal peptide.

It belongs to the FlgI family. In terms of assembly, the basal body constitutes a major portion of the flagellar organelle and consists of four rings (L,P,S, and M) mounted on a central rod.

It is found in the periplasm. Its subcellular location is the bacterial flagellum basal body. Functionally, assembles around the rod to form the L-ring and probably protects the motor/basal body from shearing forces during rotation. In Rhodopseudomonas palustris (strain HaA2), this protein is Flagellar P-ring protein.